Consider the following 358-residue polypeptide: Tetraacyldisaccharide 4'-kinase (358 aa).

ATP is bound at residue 71–78 (IAGGAGKT).

Belongs to the LpxK family.

It carries out the reaction a lipid A disaccharide + ATP = a lipid IVA + ADP + H(+). It functions in the pathway glycolipid biosynthesis; lipid IV(A) biosynthesis; lipid IV(A) from (3R)-3-hydroxytetradecanoyl-[acyl-carrier-protein] and UDP-N-acetyl-alpha-D-glucosamine: step 6/6. In terms of biological role, transfers the gamma-phosphate of ATP to the 4'-position of a tetraacyldisaccharide 1-phosphate intermediate (termed DS-1-P) to form tetraacyldisaccharide 1,4'-bis-phosphate (lipid IVA). This Methylibium petroleiphilum (strain ATCC BAA-1232 / LMG 22953 / PM1) protein is Tetraacyldisaccharide 4'-kinase.